Reading from the N-terminus, the 300-residue chain is GTPase Era (300 aa).

In terms of domain architecture, Era-type G spans 8–176 (RCGYVAIVGR…EAQIAKHLPE (169 aa)). Residues 16 to 23 (GRPNVGKS) are G1. GTP is bound at residue 16 to 23 (GRPNVGKS). Residues 42–46 (QTTRH) are G2. Residues 63-66 (DTPG) are G3. GTP is bound by residues 63 to 67 (DTPGM) and 125 to 128 (NKTD). A G4 region spans residues 125–128 (NKTD). Residues 155–157 (ISA) form a G5 region. The KH type-2 domain maps to 199–283 (VREKIMRQLG…MLNLWVKVKG (85 aa)).

The protein belongs to the TRAFAC class TrmE-Era-EngA-EngB-Septin-like GTPase superfamily. Era GTPase family. As to quaternary structure, monomer.

It is found in the cytoplasm. The protein resides in the cell inner membrane. In terms of biological role, an essential GTPase that binds both GDP and GTP, with rapid nucleotide exchange. Plays a role in 16S rRNA processing and 30S ribosomal subunit biogenesis and possibly also in cell cycle regulation and energy metabolism. This is GTPase Era from Pseudomonas entomophila (strain L48).